We begin with the raw amino-acid sequence, 271 residues long: Indole-3-glycerol phosphate synthase (271 aa).

The protein belongs to the TrpC family.

It carries out the reaction 1-(2-carboxyphenylamino)-1-deoxy-D-ribulose 5-phosphate + H(+) = (1S,2R)-1-C-(indol-3-yl)glycerol 3-phosphate + CO2 + H2O. It participates in amino-acid biosynthesis; L-tryptophan biosynthesis; L-tryptophan from chorismate: step 4/5. The chain is Indole-3-glycerol phosphate synthase from Haloarcula marismortui (strain ATCC 43049 / DSM 3752 / JCM 8966 / VKM B-1809) (Halobacterium marismortui).